A 398-amino-acid polypeptide reads, in one-letter code: 4-hydroxy-3-methylbut-2-en-1-yl diphosphate synthase (ferredoxin) (398 aa).

4 residues coordinate [4Fe-4S] cluster: Cys-306, Cys-309, Cys-340, and Glu-347.

The protein belongs to the IspG family. [4Fe-4S] cluster serves as cofactor.

It carries out the reaction (2E)-4-hydroxy-3-methylbut-2-enyl diphosphate + 2 oxidized [2Fe-2S]-[ferredoxin] + H2O = 2-C-methyl-D-erythritol 2,4-cyclic diphosphate + 2 reduced [2Fe-2S]-[ferredoxin] + H(+). Its pathway is isoprenoid biosynthesis; isopentenyl diphosphate biosynthesis via DXP pathway; isopentenyl diphosphate from 1-deoxy-D-xylulose 5-phosphate: step 5/6. Functionally, converts 2C-methyl-D-erythritol 2,4-cyclodiphosphate (ME-2,4cPP) into 1-hydroxy-2-methyl-2-(E)-butenyl 4-diphosphate. In Synechococcus sp. (strain CC9605), this protein is 4-hydroxy-3-methylbut-2-en-1-yl diphosphate synthase (ferredoxin).